The primary structure comprises 284 residues: Shikimate dehydrogenase (NADP(+)) (284 aa).

Shikimate is bound by residues 20–22 and serine 67; that span reads SIS. Lysine 71 acts as the Proton acceptor in catalysis. Aspartate 83 contacts NADP(+). Shikimate is bound by residues asparagine 92 and aspartate 107. NADP(+) contacts are provided by residues 129–133 and isoleucine 227; that span reads GAGGA. A shikimate-binding site is contributed by tyrosine 229. Glycine 250 is a binding site for NADP(+).

The protein belongs to the shikimate dehydrogenase family. In terms of assembly, homodimer.

It carries out the reaction shikimate + NADP(+) = 3-dehydroshikimate + NADPH + H(+). It participates in metabolic intermediate biosynthesis; chorismate biosynthesis; chorismate from D-erythrose 4-phosphate and phosphoenolpyruvate: step 4/7. Functionally, involved in the biosynthesis of the chorismate, which leads to the biosynthesis of aromatic amino acids. Catalyzes the reversible NADPH linked reduction of 3-dehydroshikimate (DHSA) to yield shikimate (SA). The sequence is that of Shikimate dehydrogenase (NADP(+)) from Streptococcus pneumoniae (strain ATCC 700669 / Spain 23F-1).